Consider the following 960-residue polypeptide: Lon protease homolog, mitochondrial (960 aa).

The N-terminal 56 residues, 1 to 56 (MYRAGALVLRSATLRRTRFLAAHQNFATISSQRSSVLLAKSLESSIGGAGNQKKFY), are a transit peptide targeting the mitochondrion. In terms of domain architecture, Lon N-terminal spans 92-352 (VPILAINRYP…IALLLIQKEK (261 aa)). Residues 195–250 (PKTDTPLNGRRARGKRAGLPPTPPPTPPLSTPTSAPEASATSPEEKEEKKDPERKG) are disordered. Pro residues predominate over residues 214 to 224 (PPTPPPTPPLS). Residues 225 to 236 (TPTSAPEASATS) show a composition bias toward low complexity. A compositionally biased stretch (basic and acidic residues) spans 237–250 (PEEKEEKKDPERKG). 505-512 (GPPGVGKT) contributes to the ATP binding site. The tract at residues 712–748 (EQQPEDEQPAATTAISENSDAEPVSTPSDPPTFTPEK) is disordered. One can recognise a Lon proteolytic domain in the interval 773–960 (VTPPGVIMGL…YDELYEHLFQ (188 aa)). Catalysis depends on residues Ser-867 and Lys-910.

Belongs to the peptidase S16 family. As to quaternary structure, homohexamer or homoheptamer. Organized in a ring with a central cavity.

The protein localises to the mitochondrion matrix. It catalyses the reaction Hydrolysis of proteins in presence of ATP.. Its function is as follows. ATP-dependent serine protease that mediates the selective degradation of misfolded, unassembled or oxidatively damaged polypeptides as well as certain short-lived regulatory proteins in the mitochondrial matrix. May also have a chaperone function in the assembly of inner membrane protein complexes. Participates in the regulation of mitochondrial gene expression and in the maintenance of the integrity of the mitochondrial genome. Binds to mitochondrial DNA in a site-specific manner. This is Lon protease homolog, mitochondrial from Caenorhabditis briggsae.